A 136-amino-acid polypeptide reads, in one-letter code: Lipoprotein YghG (136 aa).

Positions 1–24 are cleaved as a signal peptide; it reads MSIKQMPGRVLISLLLSVTGLLSG. A lipid anchor (N-palmitoyl cysteine) is attached at C25. C25 carries the S-diacylglycerol cysteine lipid modification.

Belongs to the GspS/AspS pilotin family.

It is found in the cell outer membrane. Its function is as follows. Involved in a type II secretion system (T2SS, formerly general secretion pathway, GSP) for the export of folded proteins across the outer membrane. In a functional T2SS this subunit helps assemble the outer membrane channel. The sequence is that of Lipoprotein YghG (yghG) from Escherichia coli (strain K12).